The chain runs to 309 residues: Homoserine kinase (309 aa).

88–98 contributes to the ATP binding site; the sequence is PLARGLGSSAA.

This sequence belongs to the GHMP kinase family. Homoserine kinase subfamily.

The protein resides in the cytoplasm. The enzyme catalyses L-homoserine + ATP = O-phospho-L-homoserine + ADP + H(+). It participates in amino-acid biosynthesis; L-threonine biosynthesis; L-threonine from L-aspartate: step 4/5. Catalyzes the ATP-dependent phosphorylation of L-homoserine to L-homoserine phosphate. This chain is Homoserine kinase, found in Halalkalibacterium halodurans (strain ATCC BAA-125 / DSM 18197 / FERM 7344 / JCM 9153 / C-125) (Bacillus halodurans).